A 30-amino-acid polypeptide reads, in one-letter code: Rothein 3.4 (30 aa).

Leucine amide is present on leucine 30.

The protein belongs to the frog skin active peptide (FSAP) family. Rothein subfamily. Expressed by the skin dorsal glands.

The protein localises to the secreted. Its function is as follows. Lacks antimicrobial activity. Does not inhibit the formation of NO by neuronal nitric oxide. In Litoria rothii (Roth's tree frog), this protein is Rothein 3.4.